The sequence spans 453 residues: Vacuolar cation/proton exchanger 1b (453 aa).

Residues 1-67 (MPVSRMMMES…LRSLLANLND (67 aa)) are Cytoplasmic-facing. The chain crosses the membrane as a helical span at residues 68–85 (VLLTTRLFLLFPAVLLAI). The Extracellular segment spans residues 86 to 91 (AATYLH). Residues 92–109 (FGQVWVFVLSLIGLVPLA) form a helical membrane-spanning segment. Residues 110-126 (ERLSFLTEQIAFYTGPT) lie on the Cytoplasmic side of the membrane. Residues 127–147 (VGGLLNATFGNVTEVIIALLA) form a helical membrane-spanning segment. The tract at residues 136 to 171 (GNVTEVIIALLALREGKIEVVKCSLLGSILSNLLLV) is cation selection. Topologically, residues 148–160 (LREGKIEVVKCSL) are extracellular. Residues 161 to 181 (LGSILSNLLLVLGTSLFLAGI) traverse the membrane as a helical segment. Topologically, residues 182–194 (ANLRAHQPYDTKQ) are cytoplasmic. Residues 195–215 (AHVNTALLMLAVLCHSLPLML) form a helical membrane-spanning segment. The Extracellular segment spans residues 216–232 (RYAVTSGDHAIVSGDAA). A helical transmembrane segment spans residues 233 to 253 (LHLSRACSILMLIAYLAYLFF). Residues 254 to 283 (QLNTHRQLFEPQQVEDDDDDDLVIAQDDEP) are Cytoplasmic-facing. Residues 284–304 (VLGFSSAMIWLALMTLLTALL) traverse the membrane as a helical segment. Over 305–327 (SGYVVSTIEAASESWELSVSFIS) the chain is Extracellular. Residues 328–348 (IILLPIVGNAAEHAGAVIFAL) form a helical membrane-spanning segment. The tract at residues 335 to 370 (GNAAEHAGAVIFALKNKMDITLGVSLGSATQISMFV) is cation selection. Topologically, residues 349-364 (KNKMDITLGVSLGSAT) are cytoplasmic. A helical membrane pass occupies residues 365–385 (QISMFVVPVSVIVAWTMGIPM). Over 386–388 (DLD) the chain is Extracellular. Residues 389–409 (FNLLETGSLFLAILVTAFTLQ) form a helical membrane-spanning segment. Residues 410–414 (EGESH) are Cytoplasmic-facing. A helical transmembrane segment spans residues 415–435 (YLKGLILVLCYAVISVCFFVI). Topologically, residues 436 to 453 (RRRSAGGTDGVHHLDVIV) are extracellular.

This sequence belongs to the Ca(2+):cation antiporter (CaCA) (TC 2.A.19) family. Cation/proton exchanger (CAX) subfamily. As to expression, expressed in embryo and roots.

It is found in the vacuole membrane. In terms of biological role, vacuolar cation/proton exchanger (CAX). Translocates Ca(2+) and other metal ions into vacuoles using the proton gradient formed by H(+)-ATPase and H(+)-pyrophosphatase. This Oryza sativa subsp. japonica (Rice) protein is Vacuolar cation/proton exchanger 1b (CAX1b).